The following is a 280-amino-acid chain: Eukaryotic translation initiation factor 3 subunit F-1 (280 aa).

The MPN domain maps to 8-138 (VRVHPVVLFQ…LRAYVCIQLG (131 aa)).

It belongs to the eIF-3 subunit F family. As to quaternary structure, component of the eukaryotic translation initiation factor 3 (eIF-3) complex. The eIF-3 complex interacts with pix.

The protein resides in the cytoplasm. Component of the eukaryotic translation initiation factor 3 (eIF-3) complex, which is involved in protein synthesis of a specialized repertoire of mRNAs and, together with other initiation factors, stimulates binding of mRNA and methionyl-tRNAi to the 40S ribosome. The eIF-3 complex specifically targets and initiates translation of a subset of mRNAs involved in cell proliferation. This chain is Eukaryotic translation initiation factor 3 subunit F-1, found in Drosophila erecta (Fruit fly).